Here is a 477-residue protein sequence, read N- to C-terminus: D(1B) dopamine receptor (477 aa).

Residues 1–39 (MLPPGSNGTAYPGQFALYQQLAQGNAVGGSAGAPPLGPS) lie on the Extracellular side of the membrane. A glycan (N-linked (GlcNAc...) asparagine) is linked at asparagine 7. The chain crosses the membrane as a helical span at residues 40-66 (QVVTACLLTLLIIWTLLGNVLVCAAIV). At 67 to 77 (RSRHLRANMTN) the chain is on the cytoplasmic side. The chain crosses the membrane as a helical span at residues 78-104 (VFIVSLAVSDLFVALLVMPWKAVAEVA). The Extracellular segment spans residues 105 to 114 (GYWPFGAFCD). A disulfide bridge links cysteine 113 with cysteine 217. The helical transmembrane segment at 115–136 (VWVAFDIMCSTASILNLCVISV) threads the bilayer. At 137-158 (DRYWAISRPFRYKRKMTQRMAL) the chain is on the cytoplasmic side. The helical transmembrane segment at 159 to 180 (VMVGLAWTLSILISFIPVQLNW) threads the bilayer. Topologically, residues 181-223 (HRDQAASWGGLDLPNNLANWTPWEEDFWEPDVNAENCDSSLNR) are extracellular. The N-linked (GlcNAc...) asparagine glycan is linked to asparagine 222. The helical transmembrane segment at 224 to 246 (TYAISSSLISFYIPVAIMIVTYT) threads the bilayer. The Cytoplasmic portion of the chain corresponds to 247–296 (RIYRIAQVQIRRISSLERAAEHAQSCRSSAACAPDTSLRASIKKETKVLK). A helical membrane pass occupies residues 297 to 320 (TLSVIMGVFVCCWLPFFILNCMVP). Over 321-340 (FCSGHPEGPPAGFPCVSETT) the chain is Extracellular. Residues 341-360 (FDVFVWFGWANSSLNPVIYA) form a helical membrane-spanning segment. The Cytoplasmic portion of the chain corresponds to 361 to 477 (FNADFQKVFA…ITPFTPNGFH (117 aa)). Cysteine 375 is lipidated: S-palmitoyl cysteine.

This sequence belongs to the G-protein coupled receptor 1 family. Neuron-specific, localized primarily within limbic regions of the brain.

Its subcellular location is the cell membrane. Its function is as follows. Dopamine receptor whose activity is mediated by G proteins which activate adenylyl cyclase. This is D(1B) dopamine receptor (DRD5) from Homo sapiens (Human).